Here is a 91-residue protein sequence, read N- to C-terminus: Putative regulatory protein Cphy_2880 (91 aa).

The protein belongs to the RemA family.

The chain is Putative regulatory protein Cphy_2880 from Lachnoclostridium phytofermentans (strain ATCC 700394 / DSM 18823 / ISDg) (Clostridium phytofermentans).